Reading from the N-terminus, the 205-residue chain is MIGRLRGIILEKQPPQVLLETHGVGYEVFMPMTCFYALPETGQEAVIFTHFVVREDAQLLFGFIHKQERVLFRELIKVNGVGPKLALAILSGMSAQQFISAVERQEINALVKLPGVGKKTAERLVVEMKDRFKGLSGDLFVPQGAGEIPAAIDAPAMPADPEGEAVAALVALGYKPQEASRMVSKVASAGSDCEMLIRDALRAAL.

The segment at 1–64 is domain I; it reads MIGRLRGIIL…EDAQLLFGFI (64 aa). A domain II region spans residues 65–143; that stretch reads HKQERVLFRE…GLSGDLFVPQ (79 aa). A flexible linker region spans residues 144 to 156; that stretch reads GAGEIPAAIDAPA. Positions 157–205 are domain III; it reads MPADPEGEAVAALVALGYKPQEASRMVSKVASAGSDCEMLIRDALRAAL.

Belongs to the RuvA family. Homotetramer. Forms an RuvA(8)-RuvB(12)-Holliday junction (HJ) complex. HJ DNA is sandwiched between 2 RuvA tetramers; dsDNA enters through RuvA and exits via RuvB. An RuvB hexamer assembles on each DNA strand where it exits the tetramer. Each RuvB hexamer is contacted by two RuvA subunits (via domain III) on 2 adjacent RuvB subunits; this complex drives branch migration. In the full resolvosome a probable DNA-RuvA(4)-RuvB(12)-RuvC(2) complex forms which resolves the HJ.

Its subcellular location is the cytoplasm. The RuvA-RuvB-RuvC complex processes Holliday junction (HJ) DNA during genetic recombination and DNA repair, while the RuvA-RuvB complex plays an important role in the rescue of blocked DNA replication forks via replication fork reversal (RFR). RuvA specifically binds to HJ cruciform DNA, conferring on it an open structure. The RuvB hexamer acts as an ATP-dependent pump, pulling dsDNA into and through the RuvAB complex. HJ branch migration allows RuvC to scan DNA until it finds its consensus sequence, where it cleaves and resolves the cruciform DNA. In Sodalis glossinidius (strain morsitans), this protein is Holliday junction branch migration complex subunit RuvA.